Here is a 91-residue protein sequence, read N- to C-terminus: Large ribosomal subunit protein uL23 (91 aa).

This sequence belongs to the universal ribosomal protein uL23 family. Part of the 50S ribosomal subunit. Contacts protein L29, and trigger factor when it is bound to the ribosome.

One of the early assembly proteins it binds 23S rRNA. One of the proteins that surrounds the polypeptide exit tunnel on the outside of the ribosome. Forms the main docking site for trigger factor binding to the ribosome. The chain is Large ribosomal subunit protein uL23 from Staphylococcus aureus (strain USA300).